A 118-amino-acid chain; its full sequence is Small ribosomal subunit protein uS13 (118 aa).

The interval 91–118 is disordered; that stretch reads HRRSLPLRGQRTKNNARTRKGPKKPIKR.

This sequence belongs to the universal ribosomal protein uS13 family. As to quaternary structure, part of the 30S ribosomal subunit. Forms a loose heterodimer with protein S19. Forms two bridges to the 50S subunit in the 70S ribosome.

In terms of biological role, located at the top of the head of the 30S subunit, it contacts several helices of the 16S rRNA. In the 70S ribosome it contacts the 23S rRNA (bridge B1a) and protein L5 of the 50S subunit (bridge B1b), connecting the 2 subunits; these bridges are implicated in subunit movement. Contacts the tRNAs in the A and P-sites. The chain is Small ribosomal subunit protein uS13 from Hydrogenovibrio crunogenus (strain DSM 25203 / XCL-2) (Thiomicrospira crunogena).